A 270-amino-acid chain; its full sequence is Acetylglutamate kinase (270 aa).

Residues 41–42 (GG), Arg-63, and Asn-166 each bind substrate.

The protein belongs to the acetylglutamate kinase family. ArgB subfamily.

It is found in the cytoplasm. It catalyses the reaction N-acetyl-L-glutamate + ATP = N-acetyl-L-glutamyl 5-phosphate + ADP. It participates in amino-acid biosynthesis; L-arginine biosynthesis; N(2)-acetyl-L-ornithine from L-glutamate: step 2/4. In terms of biological role, catalyzes the ATP-dependent phosphorylation of N-acetyl-L-glutamate. The protein is Acetylglutamate kinase of Anaeromyxobacter dehalogenans (strain 2CP-C).